Reading from the N-terminus, the 189-residue chain is Probable nicotinate-nucleotide adenylyltransferase (189 aa).

This sequence belongs to the NadD family.

The enzyme catalyses nicotinate beta-D-ribonucleotide + ATP + H(+) = deamido-NAD(+) + diphosphate. Its pathway is cofactor biosynthesis; NAD(+) biosynthesis; deamido-NAD(+) from nicotinate D-ribonucleotide: step 1/1. Catalyzes the reversible adenylation of nicotinate mononucleotide (NaMN) to nicotinic acid adenine dinucleotide (NaAD). The sequence is that of Probable nicotinate-nucleotide adenylyltransferase from Caulobacter sp. (strain K31).